Consider the following 202-residue polypeptide: Large ribosomal subunit protein uL4 (202 aa).

Over residues 42-52 (GTKAQKSRSQV) the composition is skewed to polar residues. Residues 42–70 (GTKAQKSRSQVSGTTKKSKKQKGGGARHG) are disordered.

Belongs to the universal ribosomal protein uL4 family. As to quaternary structure, part of the 50S ribosomal subunit.

Its function is as follows. One of the primary rRNA binding proteins, this protein initially binds near the 5'-end of the 23S rRNA. It is important during the early stages of 50S assembly. It makes multiple contacts with different domains of the 23S rRNA in the assembled 50S subunit and ribosome. In terms of biological role, forms part of the polypeptide exit tunnel. This chain is Large ribosomal subunit protein uL4, found in Xylella fastidiosa (strain Temecula1 / ATCC 700964).